Reading from the N-terminus, the 217-residue chain is Cytidylate kinase (217 aa).

Residue 10 to 18 (GPAGAGKST) coordinates ATP.

The protein belongs to the cytidylate kinase family. Type 1 subfamily.

Its subcellular location is the cytoplasm. It catalyses the reaction CMP + ATP = CDP + ADP. The catalysed reaction is dCMP + ATP = dCDP + ADP. The sequence is that of Cytidylate kinase from Clostridium botulinum (strain ATCC 19397 / Type A).